A 98-amino-acid chain; its full sequence is NADH-ubiquinone oxidoreductase chain 4L (98 aa).

3 helical membrane-spanning segments follow: residues 2–22, 29–49, and 61–81; these read TQAS…TLIF, TLLC…MTAL, and IVML…LAMI.

It belongs to the complex I subunit 4L family. In terms of assembly, core subunit of respiratory chain NADH dehydrogenase (Complex I) which is composed of 45 different subunits.

The protein localises to the mitochondrion inner membrane. The enzyme catalyses a ubiquinone + NADH + 5 H(+)(in) = a ubiquinol + NAD(+) + 4 H(+)(out). Core subunit of the mitochondrial membrane respiratory chain NADH dehydrogenase (Complex I) which catalyzes electron transfer from NADH through the respiratory chain, using ubiquinone as an electron acceptor. Part of the enzyme membrane arm which is embedded in the lipid bilayer and involved in proton translocation. This is NADH-ubiquinone oxidoreductase chain 4L (MT-ND4L) from Calomys musculinus (Drylands vesper mouse).